The primary structure comprises 393 residues: Geranylgeranyl pyrophosphate synthase 2 (393 aa).

Residues Lys-109, Arg-112, and His-141 each contribute to the isopentenyl diphosphate site. Mg(2+) contacts are provided by Asp-148 and Asp-152. Arg-157 is a binding site for dimethylallyl diphosphate. Residue Arg-158 participates in isopentenyl diphosphate binding. Lys-235, Thr-236, and Gln-275 together coordinate dimethylallyl diphosphate. Asp-278 serves as a coordination point for Mg(2+). Asn-282, Lys-292, and Lys-302 together coordinate dimethylallyl diphosphate.

This sequence belongs to the FPP/GGPP synthase family. Requires Mg(2+) as cofactor.

The enzyme catalyses isopentenyl diphosphate + dimethylallyl diphosphate = (2E)-geranyl diphosphate + diphosphate. The catalysed reaction is isopentenyl diphosphate + (2E)-geranyl diphosphate = (2E,6E)-farnesyl diphosphate + diphosphate. It carries out the reaction isopentenyl diphosphate + (2E,6E)-farnesyl diphosphate = (2E,6E,10E)-geranylgeranyl diphosphate + diphosphate. It functions in the pathway plant hormone biosynthesis; gibberellin biosynthesis. Functionally, geranylgeranyl pyrophosphate synthase; part of the gene cluster that mediates the biosynthesis of gibberellins (GAs), diterpenoids that may provide a selective advantage during infection of the preferred host plant, rice. Gibberellins (GAs) are diterpenoids and are synthesized via the mevalonate pathway. Biosynthesis of the major metabolite GA3 (gibberellic acid) from geranylgeranyl diphosphate (GGPP) requires 13 steps. The GGPP produced by the geranylgeranyl diphosphate synthase GGS2 is converted to ent-kaurene via ent-copalyldiphosphate in a two-step cyclization reaction performed by the bifunctional ent-copalyl diphosphate synthase/ent-kaurene synthase enzyme (CPS/KS). Ent-Kaurene is metabolized to GAs by a series of oxidation reactions catalyzed by cytochrome P450 monooxygenases. Cytochrome P450 monooxygenase P450-4 is an ent-kaurene oxidase that catalyzes the three oxidation steps between ent-kaurene and ent-kaurenoic acid. The highly multifunctional cytochrome P450 monooxygenase P450-1 then catalyzes four steps involving oxidation at two carbon atoms, in the main pathway from ent-kaurenoic acid to GA14 via GA12-aldehyde as well as producing kaurenolides and fujenoic acids as by-products. The cytochrome P450 monooxygenase P450-2 then converts GA14 to GA4 by removal of C-20. GA4 is further converted to GA7 by the GA4 desaturase DES via 1,2-desaturation before cytochrome P450 monooxygenase P450-3, a 13-hydroxylase, hydroxylates GA7 to GA3, the final product of the GA-biosynthetic pathway. The polypeptide is Geranylgeranyl pyrophosphate synthase 2 (Gibberella fujikuroi (strain CBS 195.34 / IMI 58289 / NRRL A-6831) (Bakanae and foot rot disease fungus)).